Reading from the N-terminus, the 410-residue chain is Phosphoserine phosphatase (410 aa).

Residues 13-91 (LVKIFGKDRP…QAEIISGIGD (79 aa)) form the ACT domain. D187 functions as the Nucleophile in the catalytic mechanism. The Mg(2+) site is built by D187 and D189. The Proton donor role is filled by D189. Residues E196, R232, 275 to 276 (SG), and K320 contribute to the substrate site. Residue D343 participates in Mg(2+) binding. Substrate is bound at residue N346.

Belongs to the HAD-like hydrolase superfamily. SerB family. It depends on Mg(2+) as a cofactor.

It carries out the reaction O-phospho-L-serine + H2O = L-serine + phosphate. It catalyses the reaction O-phospho-D-serine + H2O = D-serine + phosphate. Its pathway is amino-acid biosynthesis; L-serine biosynthesis; L-serine from 3-phospho-D-glycerate: step 3/3. Catalyzes the dephosphorylation of phosphoserine (P-Ser) in vitro. Also catalyzes the dephosphorylation of phosphothreonine (P-Thr) in vitro. This is Phosphoserine phosphatase from Streptomyces coelicolor (strain ATCC BAA-471 / A3(2) / M145).